The primary structure comprises 133 residues: Ribonuclease VapC1 (133 aa).

Positions 7 and 98 each coordinate Mg(2+).

This sequence belongs to the PINc/VapC protein family. The cofactor is Mg(2+).

Functionally, toxic component of a type II toxin-antitoxin (TA) system. The cognate antitoxin is VapB1. The chain is Ribonuclease VapC1 from Mycobacterium tuberculosis (strain CDC 1551 / Oshkosh).